The primary structure comprises 172 residues: Large ribosomal subunit protein bL21m (172 aa).

The N-terminal 20 residues, 1–20, are a transit peptide targeting the mitochondrion; that stretch reads MIRNIGSNLMKSSSSILLRN.

This sequence belongs to the bacterial ribosomal protein bL21 family.

It is found in the mitochondrion. In Dictyostelium discoideum (Social amoeba), this protein is Large ribosomal subunit protein bL21m (mrpl21).